Consider the following 393-residue polypeptide: uncharacterized protein (393 aa).

Belongs to the Gfo/Idh/MocA family.

This is an uncharacterized protein from Bacillus subtilis (strain 168).